A 457-amino-acid polypeptide reads, in one-letter code: Siroheme synthase (457 aa).

A precorrin-2 dehydrogenase /sirohydrochlorin ferrochelatase region spans residues 1 to 204 (MDHLPIFCQL…NDQKAITETT (204 aa)). NAD(+) contacts are provided by residues 22–23 (DV) and 43–44 (LA). The residue at position 128 (S128) is a Phosphoserine. Residues 216 to 457 (GEVVLVGAGP…RDKLNWFSNH (242 aa)) form a uroporphyrinogen-III C-methyltransferase region. P225 is a binding site for S-adenosyl-L-methionine. The Proton acceptor role is filled by D248. K270 acts as the Proton donor in catalysis. Residues 301 to 303 (GGD), I306, 331 to 332 (TA), M382, and G411 each bind S-adenosyl-L-methionine.

This sequence in the N-terminal section; belongs to the precorrin-2 dehydrogenase / sirohydrochlorin ferrochelatase family. In the C-terminal section; belongs to the precorrin methyltransferase family.

The catalysed reaction is uroporphyrinogen III + 2 S-adenosyl-L-methionine = precorrin-2 + 2 S-adenosyl-L-homocysteine + H(+). The enzyme catalyses precorrin-2 + NAD(+) = sirohydrochlorin + NADH + 2 H(+). It catalyses the reaction siroheme + 2 H(+) = sirohydrochlorin + Fe(2+). Its pathway is cofactor biosynthesis; adenosylcobalamin biosynthesis; precorrin-2 from uroporphyrinogen III: step 1/1. The protein operates within cofactor biosynthesis; adenosylcobalamin biosynthesis; sirohydrochlorin from precorrin-2: step 1/1. It participates in porphyrin-containing compound metabolism; siroheme biosynthesis; precorrin-2 from uroporphyrinogen III: step 1/1. It functions in the pathway porphyrin-containing compound metabolism; siroheme biosynthesis; siroheme from sirohydrochlorin: step 1/1. Its pathway is porphyrin-containing compound metabolism; siroheme biosynthesis; sirohydrochlorin from precorrin-2: step 1/1. In terms of biological role, multifunctional enzyme that catalyzes the SAM-dependent methylations of uroporphyrinogen III at position C-2 and C-7 to form precorrin-2 via precorrin-1. Then it catalyzes the NAD-dependent ring dehydrogenation of precorrin-2 to yield sirohydrochlorin. Finally, it catalyzes the ferrochelation of sirohydrochlorin to yield siroheme. The polypeptide is Siroheme synthase (Escherichia coli O6:K15:H31 (strain 536 / UPEC)).